The following is a 728-amino-acid chain: Catalase-peroxidase 1 (728 aa).

Positions Trp-91–Tyr-218 form a cross-link, tryptophyl-tyrosyl-methioninium (Trp-Tyr) (with M-244). The active-site Proton acceptor is His-92. The segment at residues Tyr-218 to Met-244 is a cross-link (tryptophyl-tyrosyl-methioninium (Tyr-Met) (with W-91)). Heme b is bound at residue His-259.

The protein belongs to the peroxidase family. Peroxidase/catalase subfamily. As to quaternary structure, homodimer or homotetramer. It depends on heme b as a cofactor. In terms of processing, formation of the three residue Trp-Tyr-Met cross-link is important for the catalase, but not the peroxidase activity of the enzyme.

It carries out the reaction H2O2 + AH2 = A + 2 H2O. It catalyses the reaction 2 H2O2 = O2 + 2 H2O. Its function is as follows. Bifunctional enzyme with both catalase and broad-spectrum peroxidase activity. The chain is Catalase-peroxidase 1 from Burkholderia vietnamiensis (strain G4 / LMG 22486) (Burkholderia cepacia (strain R1808)).